Consider the following 318-residue polypeptide: Ankyrin repeat domain-containing protein 1 (318 aa).

Positions 37-77 (ALEKQEDLKTTSKSLIELEEEKQSKEKQLKSELLKKKLEER) form a coiled coil. 5 ANK repeats span residues 151-180 (YKRT…NIEF), 184-213 (LEST…AINA), 217-246 (LLST…DLNA), 250-279 (EGDT…NLNI), and 283-314 (AGKT…KNSH).

It localises to the nucleus. Functionally, may act as a nuclear transcription factor that negatively regulates the expression of cardiac genes. This chain is Ankyrin repeat domain-containing protein 1 (ankrd1), found in Xenopus laevis (African clawed frog).